The following is a 165-amino-acid chain: Zinc finger C2H2 protein ECU11_0990 (165 aa).

2 stretches are compositionally biased toward basic and acidic residues: residues 1-10 and 19-32; these read MEAESPKERV and DPER…DTSS. The segment at 1-38 is disordered; that stretch reads MEAESPKERVQGVSGESWDPERGVKEREDTSSKKGKGV. 2 consecutive C2H2-type zinc fingers follow at residues 103–125 and 136–158; these read FGCE…KAQH and LFCP…SRYH.

The polypeptide is Zinc finger C2H2 protein ECU11_0990 (Encephalitozoon cuniculi (strain GB-M1) (Microsporidian parasite)).